The following is a 663-amino-acid chain: UvrABC system protein B (663 aa).

The 389-residue stretch at 26–414 (DGLESGLAKQ…DNVAEQVVRP (389 aa)) folds into the Helicase ATP-binding domain. 39-46 (GVTGSGKT) is a binding site for ATP. A Beta-hairpin motif is present at residues 92-115 (YYDYYQPEAYVPASDTFIEKDASI). Residues 430–596 (QVDDLMSEIR…GINKSVEDIL (167 aa)) enclose the Helicase C-terminal domain. One can recognise a UVR domain in the interval 624–659 (VKQINALEKQMYSHAQNMEFELAAKIRDEYLLLKEQ).

Belongs to the UvrB family. In terms of assembly, forms a heterotetramer with UvrA during the search for lesions. Interacts with UvrC in an incision complex.

It is found in the cytoplasm. In terms of biological role, the UvrABC repair system catalyzes the recognition and processing of DNA lesions. A damage recognition complex composed of 2 UvrA and 2 UvrB subunits scans DNA for abnormalities. Upon binding of the UvrA(2)B(2) complex to a putative damaged site, the DNA wraps around one UvrB monomer. DNA wrap is dependent on ATP binding by UvrB and probably causes local melting of the DNA helix, facilitating insertion of UvrB beta-hairpin between the DNA strands. Then UvrB probes one DNA strand for the presence of a lesion. If a lesion is found the UvrA subunits dissociate and the UvrB-DNA preincision complex is formed. This complex is subsequently bound by UvrC and the second UvrB is released. If no lesion is found, the DNA wraps around the other UvrB subunit that will check the other stand for damage. The polypeptide is UvrABC system protein B (Legionella pneumophila subsp. pneumophila (strain Philadelphia 1 / ATCC 33152 / DSM 7513)).